Consider the following 980-residue polypeptide: Valine--tRNA ligase (980 aa).

The 'HIGH' region motif lies at 43–53 (PNVTGTLHMGH). Positions 586–590 (KMSKS) match the 'KMSKS' region motif. Lys589 serves as a coordination point for ATP. Residues 914 to 978 (LVDMDAERTR…QLTGLREQRA (65 aa)) are a coiled coil.

Belongs to the class-I aminoacyl-tRNA synthetase family. ValS type 1 subfamily. As to quaternary structure, monomer.

Its subcellular location is the cytoplasm. The enzyme catalyses tRNA(Val) + L-valine + ATP = L-valyl-tRNA(Val) + AMP + diphosphate. In terms of biological role, catalyzes the attachment of valine to tRNA(Val). As ValRS can inadvertently accommodate and process structurally similar amino acids such as threonine, to avoid such errors, it has a 'posttransfer' editing activity that hydrolyzes mischarged Thr-tRNA(Val) in a tRNA-dependent manner. The chain is Valine--tRNA ligase from Xanthomonas euvesicatoria pv. vesicatoria (strain 85-10) (Xanthomonas campestris pv. vesicatoria).